A 314-amino-acid chain; its full sequence is Acetyl-coenzyme A carboxylase carboxyl transferase subunit alpha (314 aa).

The 258-residue stretch at 32 to 289 folds into the CoA carboxyltransferase C-terminal domain; sequence EIDMLEASLK…KKMFLKHLNE (258 aa).

The protein belongs to the AccA family. Acetyl-CoA carboxylase is a heterohexamer composed of biotin carboxyl carrier protein (AccB), biotin carboxylase (AccC) and two subunits each of ACCase subunit alpha (AccA) and ACCase subunit beta (AccD).

The protein resides in the cytoplasm. It carries out the reaction N(6)-carboxybiotinyl-L-lysyl-[protein] + acetyl-CoA = N(6)-biotinyl-L-lysyl-[protein] + malonyl-CoA. It functions in the pathway lipid metabolism; malonyl-CoA biosynthesis; malonyl-CoA from acetyl-CoA: step 1/1. Functionally, component of the acetyl coenzyme A carboxylase (ACC) complex. First, biotin carboxylase catalyzes the carboxylation of biotin on its carrier protein (BCCP) and then the CO(2) group is transferred by the carboxyltransferase to acetyl-CoA to form malonyl-CoA. This chain is Acetyl-coenzyme A carboxylase carboxyl transferase subunit alpha, found in Staphylococcus epidermidis (strain ATCC 12228 / FDA PCI 1200).